The sequence spans 128 residues: MSKPFYVRFEVPPELAEKAYEALRKARESGGKIKKGTNETTKAVDKGLAKLVLIAEDVDPPEIVAHLPLLCEEKKIPYVYVPSKKKLGEAAGIEVQAAAAAIIDPGAAKDLVEEIIKEVEQIKAKAGL.

Belongs to the eukaryotic ribosomal protein eL8 family. Part of the 50S ribosomal subunit. Probably part of the RNase P complex.

The protein resides in the cytoplasm. Functionally, multifunctional RNA-binding protein that recognizes the K-turn motif in ribosomal RNA, the RNA component of RNase P, box H/ACA, box C/D and box C'/D' sRNAs. This is Large ribosomal subunit protein eL8 from Ignicoccus hospitalis (strain KIN4/I / DSM 18386 / JCM 14125).